A 189-amino-acid chain; its full sequence is Urease accessory protein UreF (189 aa).

The protein belongs to the UreF family. As to quaternary structure, ureD, UreF and UreG form a complex that acts as a GTP-hydrolysis-dependent molecular chaperone, activating the urease apoprotein by helping to assemble the nickel containing metallocenter of UreC. The UreE protein probably delivers the nickel.

It localises to the cytoplasm. Functionally, required for maturation of urease via the functional incorporation of the urease nickel metallocenter. This chain is Urease accessory protein UreF, found in Staphylococcus xylosus.